We begin with the raw amino-acid sequence, 319 residues long: uncharacterized protein (319 aa).

The chain crosses the membrane as a helical span at residues 270 to 290 (AAALWWIPAWLAMIVEVAVLG).

It is found in the membrane. This is an uncharacterized protein from Mycobacterium tuberculosis (strain CDC 1551 / Oshkosh).